Reading from the N-terminus, the 508-residue chain is Pancreatic alpha-amylase (508 aa).

The signal sequence occupies residues 1–15; that stretch reads MKFVLLLSLIGFCWA. A Pyrrolidone carboxylic acid modification is found at Q16. Intrachain disulfides connect C43-C101, C85-C130, and C156-C172. 3 residues coordinate Ca(2+): N115, R170, and D179. R207 is a chloride binding site. D209 functions as the Nucleophile in the catalytic mechanism. H213 provides a ligand contact to Ca(2+). The active-site Proton donor is E245. Chloride-binding residues include N310 and R349. Intrachain disulfides connect C390–C396 and C462–C474.

The protein belongs to the glycosyl hydrolase 13 family. In terms of assembly, monomer. Ca(2+) serves as cofactor. Requires chloride as cofactor.

Its subcellular location is the secreted. The protein localises to the extracellular space. It catalyses the reaction Endohydrolysis of (1-&gt;4)-alpha-D-glucosidic linkages in polysaccharides containing three or more (1-&gt;4)-alpha-linked D-glucose units.. The sequence is that of Pancreatic alpha-amylase (Amy2) from Rattus norvegicus (Rat).